We begin with the raw amino-acid sequence, 179 residues long: Shikimate kinase (179 aa).

15-20 (GAGKTS) provides a ligand contact to ATP. Thr-19 contributes to the Mg(2+) binding site. Substrate is bound by residues Asp-37, Arg-61, and Gly-83. ATP is bound at residue Arg-122. Arg-142 is a binding site for substrate.

Belongs to the shikimate kinase family. In terms of assembly, monomer. It depends on Mg(2+) as a cofactor.

It localises to the cytoplasm. It carries out the reaction shikimate + ATP = 3-phosphoshikimate + ADP + H(+). It functions in the pathway metabolic intermediate biosynthesis; chorismate biosynthesis; chorismate from D-erythrose 4-phosphate and phosphoenolpyruvate: step 5/7. Functionally, catalyzes the specific phosphorylation of the 3-hydroxyl group of shikimic acid using ATP as a cosubstrate. The chain is Shikimate kinase from Coxiella burnetii (strain Dugway 5J108-111).